Consider the following 254-residue polypeptide: tRNA uridine(34) hydroxylase (254 aa).

In terms of domain architecture, Rhodanese spans 123–217; that stretch reads QDPNVILLDT…YLESIPESES (95 aa). Catalysis depends on Cys-177, which acts as the Cysteine persulfide intermediate.

It belongs to the TrhO family.

The catalysed reaction is uridine(34) in tRNA + AH2 + O2 = 5-hydroxyuridine(34) in tRNA + A + H2O. Catalyzes oxygen-dependent 5-hydroxyuridine (ho5U) modification at position 34 in tRNAs. The polypeptide is tRNA uridine(34) hydroxylase (Legionella pneumophila (strain Corby)).